A 178-amino-acid polypeptide reads, in one-letter code: Probable chorismate pyruvate-lyase (178 aa).

Positions 72, 110, and 169 each coordinate substrate.

This sequence belongs to the UbiC family.

It localises to the cytoplasm. It carries out the reaction chorismate = 4-hydroxybenzoate + pyruvate. The protein operates within cofactor biosynthesis; ubiquinone biosynthesis. In terms of biological role, removes the pyruvyl group from chorismate, with concomitant aromatization of the ring, to provide 4-hydroxybenzoate (4HB) for the ubiquinone pathway. This chain is Probable chorismate pyruvate-lyase, found in Nitrosomonas europaea (strain ATCC 19718 / CIP 103999 / KCTC 2705 / NBRC 14298).